Here is a 223-residue protein sequence, read N- to C-terminus: Phosphoribosylformylglycinamidine synthase subunit PurQ (223 aa).

One can recognise a Glutamine amidotransferase type-1 domain in the interval 4–223 (KIGVITFPGT…FLSAVGTIAA (220 aa)). The Nucleophile role is filled by Cys-87. Active-site residues include His-195 and Glu-197.

In terms of assembly, part of the FGAM synthase complex composed of 1 PurL, 1 PurQ and 2 PurS subunits.

The protein resides in the cytoplasm. The catalysed reaction is N(2)-formyl-N(1)-(5-phospho-beta-D-ribosyl)glycinamide + L-glutamine + ATP + H2O = 2-formamido-N(1)-(5-O-phospho-beta-D-ribosyl)acetamidine + L-glutamate + ADP + phosphate + H(+). It catalyses the reaction L-glutamine + H2O = L-glutamate + NH4(+). It functions in the pathway purine metabolism; IMP biosynthesis via de novo pathway; 5-amino-1-(5-phospho-D-ribosyl)imidazole from N(2)-formyl-N(1)-(5-phospho-D-ribosyl)glycinamide: step 1/2. In terms of biological role, part of the phosphoribosylformylglycinamidine synthase complex involved in the purines biosynthetic pathway. Catalyzes the ATP-dependent conversion of formylglycinamide ribonucleotide (FGAR) and glutamine to yield formylglycinamidine ribonucleotide (FGAM) and glutamate. The FGAM synthase complex is composed of three subunits. PurQ produces an ammonia molecule by converting glutamine to glutamate. PurL transfers the ammonia molecule to FGAR to form FGAM in an ATP-dependent manner. PurS interacts with PurQ and PurL and is thought to assist in the transfer of the ammonia molecule from PurQ to PurL. The chain is Phosphoribosylformylglycinamidine synthase subunit PurQ from Corynebacterium glutamicum (strain ATCC 13032 / DSM 20300 / JCM 1318 / BCRC 11384 / CCUG 27702 / LMG 3730 / NBRC 12168 / NCIMB 10025 / NRRL B-2784 / 534).